The following is a 356-amino-acid chain: DNA polymerase IV (356 aa).

The 182-residue stretch at 7–188 folds into the UmuC domain; it reads IIHIDMDCFY…LPLKKIPRVG (182 aa). The Mg(2+) site is built by Asp11 and Asp106. The active site involves Glu107.

Belongs to the DNA polymerase type-Y family. In terms of assembly, monomer. Mg(2+) serves as cofactor.

It localises to the cytoplasm. It catalyses the reaction DNA(n) + a 2'-deoxyribonucleoside 5'-triphosphate = DNA(n+1) + diphosphate. Its function is as follows. Poorly processive, error-prone DNA polymerase involved in untargeted mutagenesis. Copies undamaged DNA at stalled replication forks, which arise in vivo from mismatched or misaligned primer ends. These misaligned primers can be extended by PolIV. Exhibits no 3'-5' exonuclease (proofreading) activity. May be involved in translesional synthesis, in conjunction with the beta clamp from PolIII. This Actinobacillus pleuropneumoniae serotype 5b (strain L20) protein is DNA polymerase IV.